We begin with the raw amino-acid sequence, 493 residues long: Glycerol kinase (493 aa).

Position 13 (Thr13) interacts with ADP. ATP-binding residues include Thr13, Thr14, and Ser15. Thr13 contributes to the sn-glycerol 3-phosphate binding site. Arg17 serves as a coordination point for ADP. Positions 83, 84, 135, and 244 each coordinate sn-glycerol 3-phosphate. 5 residues coordinate glycerol: Arg83, Glu84, Tyr135, Asp244, and Gln245. Positions 266 and 309 each coordinate ADP. The ATP site is built by Thr266, Gly309, Gln313, and Gly410. ADP contacts are provided by Gly410 and Asn414.

This sequence belongs to the FGGY kinase family.

It carries out the reaction glycerol + ATP = sn-glycerol 3-phosphate + ADP + H(+). It participates in polyol metabolism; glycerol degradation via glycerol kinase pathway; sn-glycerol 3-phosphate from glycerol: step 1/1. Its activity is regulated as follows. Inhibited by fructose 1,6-bisphosphate (FBP). Functionally, key enzyme in the regulation of glycerol uptake and metabolism. Catalyzes the phosphorylation of glycerol to yield sn-glycerol 3-phosphate. The polypeptide is Glycerol kinase (Shewanella piezotolerans (strain WP3 / JCM 13877)).